The following is a 775-amino-acid chain: 5-methyltetrahydropteroyltriglutamate--homocysteine methyltransferase (775 aa).

Residues 16–19 and Lys115 each bind 5-methyltetrahydropteroyltri-L-glutamate; that span reads REMK. L-homocysteine-binding positions include 435 to 437 and Glu488; that span reads IGS. L-methionine is bound by residues 435–437 and Glu488; that span reads IGS. 5-methyltetrahydropteroyltri-L-glutamate is bound by residues 519–520 and Trp565; that span reads RC. Asp603 provides a ligand contact to L-homocysteine. Asp603 is a binding site for L-methionine. Position 609 (Glu609) interacts with 5-methyltetrahydropteroyltri-L-glutamate. Residues His645, Cys647, and Glu669 each contribute to the Zn(2+) site. The Proton donor role is filled by His698. Cys730 lines the Zn(2+) pocket.

The protein belongs to the vitamin-B12 independent methionine synthase family. It depends on Zn(2+) as a cofactor.

The enzyme catalyses 5-methyltetrahydropteroyltri-L-glutamate + L-homocysteine = tetrahydropteroyltri-L-glutamate + L-methionine. Its pathway is amino-acid biosynthesis; L-methionine biosynthesis via de novo pathway; L-methionine from L-homocysteine (MetE route): step 1/1. Catalyzes the transfer of a methyl group from 5-methyltetrahydrofolate to homocysteine resulting in methionine formation. The sequence is that of 5-methyltetrahydropteroyltriglutamate--homocysteine methyltransferase from Coxiella burnetii (strain CbuK_Q154) (Coxiella burnetii (strain Q154)).